Reading from the N-terminus, the 369-residue chain is MKNAYYIGLMSGTSMDGVDAVLVDFSGAQPQLIASHTEAIPSHLLKGLQRLCSPSTDEINRLGRLDRNVGELFALAVNNLLTKCAIAKEEVIAIGSHGQTVRHMPNLEVGFTLQIGDPNTIATETGIDVIADFRRKDIALGGQGAPLVPAFHQQTFAEVGKKRIILNIGGIANITYLPGNSDQVLGFDTGPGNTLVDAWIQQVKSEPFDRDGAWAASGKTDQDLLTQLLSHPYFSLAYPKSTGRELFNQAWLEQQLSPFNHLDEEDIQSTLLDLTCHSIARDMIKLSNEGELYVCGGGAFNGQLMQRLAALLPGYTLNTTSALGVDPKWAEGIAFAWLAMRNHLGLPANLPAVTGASREAVLGGRFSAK.

Position 12-19 (12-19 (GTSMDGVD)) interacts with ATP.

This sequence belongs to the anhydro-N-acetylmuramic acid kinase family.

The enzyme catalyses 1,6-anhydro-N-acetyl-beta-muramate + ATP + H2O = N-acetyl-D-muramate 6-phosphate + ADP + H(+). It participates in amino-sugar metabolism; 1,6-anhydro-N-acetylmuramate degradation. It functions in the pathway cell wall biogenesis; peptidoglycan recycling. Functionally, catalyzes the specific phosphorylation of 1,6-anhydro-N-acetylmuramic acid (anhMurNAc) with the simultaneous cleavage of the 1,6-anhydro ring, generating MurNAc-6-P. Is required for the utilization of anhMurNAc either imported from the medium or derived from its own cell wall murein, and thus plays a role in cell wall recycling. In Shewanella baltica (strain OS223), this protein is Anhydro-N-acetylmuramic acid kinase.